A 215-amino-acid polypeptide reads, in one-letter code: Putative O-methyltransferase MAB_1361c (215 aa).

Residues valine 42, glutamate 64, 66–67 (GT), serine 72, aspartate 90, and valine 91 each bind S-adenosyl-L-methionine. Aspartate 138 provides a ligand contact to substrate.

Belongs to the class I-like SAM-binding methyltransferase superfamily. Cation-dependent O-methyltransferase family.

The polypeptide is Putative O-methyltransferase MAB_1361c (Mycobacteroides abscessus (strain ATCC 19977 / DSM 44196 / CCUG 20993 / CIP 104536 / JCM 13569 / NCTC 13031 / TMC 1543 / L948) (Mycobacterium abscessus)).